The chain runs to 209 residues: Phosphopantothenoylcysteine decarboxylase (209 aa).

FMN contacts are provided by residues 28-30 (GSV) and 53-55 (TKS). His-90 (proton donor) is an active-site residue. FMN is bound by residues 106-109 (SANT) and Ala-140. 3 residues coordinate N-[(R)-4-phosphopantothenoyl]-L-cysteine: Asn-142, Arg-172, and Ala-174. The active-site Proton donor is the Cys-175. Met-183 is a binding site for N-[(R)-4-phosphopantothenoyl]-L-cysteine.

The protein belongs to the HFCD (homooligomeric flavin containing Cys decarboxylase) superfamily. As to quaternary structure, homotrimer. FMN serves as cofactor. Expressed in roots, shoots, leaves, flowers, developing siliques and seeds with highest expression in seed embryos and phloem.

The enzyme catalyses N-[(R)-4-phosphopantothenoyl]-L-cysteine + H(+) = (R)-4'-phosphopantetheine + CO2. The protein operates within cofactor biosynthesis; coenzyme A biosynthesis; CoA from (R)-pantothenate: step 3/5. Involved in plant growth, and salt and osmotic tolerance. Catalyzes the decarboxylation of 4'-phosphopantothenoylcysteine to 4'-phosphopantetheine, a key step in coenzyme A biosynthesis. The enzyme is also able to decarboxylate pantothenoylcysteine to pantothenoylcysteamine. The chain is Phosphopantothenoylcysteine decarboxylase from Arabidopsis thaliana (Mouse-ear cress).